The following is an 873-amino-acid chain: Probable beta-glucosidase A (873 aa).

Residues 1–19 (MRFGWLEVAALTAASVANA) form the signal peptide. Residues N71, N222, and N263 are each glycosylated (N-linked (GlcNAc...) asparagine). D291 is an active-site residue. N-linked (GlcNAc...) asparagine glycosylation is found at N326, N333, N365, N453, N534, N553, N575, N679, and N725. The interval 731–764 (DSSDDPNYGWEDSEYIPEGARDGSPQPLLKAGGA) is disordered.

Belongs to the glycosyl hydrolase 3 family.

The protein resides in the secreted. The catalysed reaction is Hydrolysis of terminal, non-reducing beta-D-glucosyl residues with release of beta-D-glucose.. Its pathway is glycan metabolism; cellulose degradation. Its function is as follows. Beta-glucosidases are one of a number of cellulolytic enzymes involved in the degradation of cellulosic biomass. Catalyzes the last step releasing glucose from the inhibitory cellobiose. This Aspergillus fumigatus (strain CBS 144.89 / FGSC A1163 / CEA10) (Neosartorya fumigata) protein is Probable beta-glucosidase A (bglA).